A 96-amino-acid chain; its full sequence is Large ribosomal subunit protein bL21 (96 aa).

The protein belongs to the bacterial ribosomal protein bL21 family. In terms of assembly, part of the 50S ribosomal subunit. Contacts protein L20.

This protein binds to 23S rRNA in the presence of protein L20. The chain is Large ribosomal subunit protein bL21 from Chlorobium chlorochromatii (strain CaD3).